The following is a 497-amino-acid chain: Probable FAD-binding monooxygenase AlmA (497 aa).

A helical transmembrane segment spans residues 4-24 (QVDVLIIGAGISGIGLAVHLS). FAD is bound by residues serine 15, glutamate 36, aspartate 56, phenylalanine 62, and valine 104. 54–56 (RSD) provides a ligand contact to NADP(+). NADP(+) is bound by residues 184-190 (SGATAIT), 208-209 (RS), and 292-293 (RL). Valine 395 contacts FAD.

It belongs to the FAD-binding monooxygenase family. It depends on FAD as a cofactor.

It localises to the cell membrane. It functions in the pathway hydrocarbon metabolism; alkane degradation. Functionally, is involved in the degradation of n-alkanes with C chain lengths of 32 and longer. Allows Acinetobacter sp. strain DSM 17874 to grow on long-chain n-alkanes such as dotriacontane (C32H66) or hexatriacontane (C36H74) as a sole carbon source. The sequence is that of Probable FAD-binding monooxygenase AlmA from Acinetobacter sp.